A 351-amino-acid polypeptide reads, in one-letter code: Probable minor fimbrial subunit LpfD (351 aa).

A signal peptide spans 1–22 (MKAAIALSLLGCVFGFSGKAFA).

It belongs to the fimbrial protein family.

It is found in the fimbrium. Functionally, part of the lpfABCC'DE fimbrial operon. LP fimbriae may participate in the interaction with eukaryotic cells by assisting in microcolony formation. The polypeptide is Probable minor fimbrial subunit LpfD (lpfD) (Escherichia coli O157:H7).